The following is a 365-amino-acid chain: Eukaryotic translation initiation factor 3 subunit H (365 aa).

Residues 11–160 (VQVEALVVMK…LRAFRLSPQF (150 aa)) enclose the MPN domain. A coiled-coil region spans residues 273–303 (YQRSLAREQTKIAAWQAKRKAENATRAQLKQ).

This sequence belongs to the eIF-3 subunit H family. Component of the eukaryotic translation initiation factor 3 (eIF-3) complex.

Its subcellular location is the cytoplasm. Functionally, component of the eukaryotic translation initiation factor 3 (eIF-3) complex, which is involved in protein synthesis of a specialized repertoire of mRNAs and, together with other initiation factors, stimulates binding of mRNA and methionyl-tRNAi to the 40S ribosome. The eIF-3 complex specifically targets and initiates translation of a subset of mRNAs involved in cell proliferation. This chain is Eukaryotic translation initiation factor 3 subunit H, found in Coccidioides immitis (strain RS) (Valley fever fungus).